The sequence spans 30 residues: Cliotide T20 (30 aa).

The segment at residues 1 to 30 is a cross-link (cyclopeptide (Gly-Asn)); sequence GSAIRCGESCLLGKCYTPGCTCDRPICKKN. Intrachain disulfides connect Cys-6/Cys-20, Cys-10/Cys-22, and Cys-15/Cys-27.

Contains 3 disulfide bonds. In terms of processing, this is a cyclic peptide. As to expression, expressed in root nodules but not in seed.

Functionally, probably participates in a plant defense mechanism. Active against Gram-negative bacterium E.coli ATCC 700926 (MIC=0.5 uM) under low-salt conditions. Not active against Gram-positive bacterium S.aureus ATCC 12600 up to a concentration of 100 uM under low-salt conditions. Exhibits immunomodulatory activity but no cytotoxicity in vitro. The polypeptide is Cliotide T20 (Clitoria ternatea (Butterfly pea)).